We begin with the raw amino-acid sequence, 380 residues long: Methenyltetrahydrofolate synthase domain-containing protein (380 aa).

Residues 245-258 (EEQAGKDVTLRDGP) are compositionally biased toward basic and acidic residues. Disordered regions lie at residues 245–283 (EEQA…PLSS) and 361–380 (LVGS…IAGP). Residues 282–355 (SSVQIGNLPR…NTVRVVLARQ (74 aa)) enclose the RRM domain.

In Bos taurus (Bovine), this protein is Methenyltetrahydrofolate synthase domain-containing protein (MTHFSD).